A 111-amino-acid polypeptide reads, in one-letter code: MSDAAVDTSSEITTKDLKEKKEVVEEAENGRDAPANGNAQNEENGEQEADNEVDEEEEEGGEEEEEEEEGDGEEEDGDEDEEAEAPTGKRVAEDDEDDDVDTKKQKTEEDD.

Residue M1 is modified to N-acetylmethionine. Residues 1-111 form a disordered region; sequence MSDAAVDTSS…TKKQKTEEDD (111 aa). At S2 the chain carries N-acetylserine; in Prothymosin alpha, N-terminally processed. A Phosphoserine modification is found at S2. A Phosphothreonine modification is found at T8. 2 positions are modified to phosphoserine: S9 and S10. Phosphothreonine occurs at positions 13 and 14. The segment covering 13-31 has biased composition (basic and acidic residues); the sequence is TTKDLKEKKEVVEEAENGR. Position 15 is an N6-acetyllysine; alternate (K15). The residue at position 15 (K15) is an N6-succinyllysine; alternate. Positions 43 to 84 are enriched in acidic residues; that stretch reads ENGEQEADNEVDEEEEEGGEEEEEEEEGDGEEEDGDEDEEAE. The span at 101–111 shows a compositional bias: basic and acidic residues; the sequence is DTKKQKTEEDD. Residue T102 is modified to Phosphothreonine. At K103 the chain carries N6-acetyllysine; alternate. Residue K103 forms a Glycyl lysine isopeptide (Lys-Gly) (interchain with G-Cter in SUMO2); alternate linkage. Residue T107 is modified to Phosphothreonine.

It belongs to the pro/parathymosin family. In terms of assembly, interacts with NUPR1; regulates apoptotic process. In terms of processing, covalently linked to a small RNA of about 20 nucleotides.

The protein localises to the nucleus. In terms of biological role, prothymosin alpha may mediate immune function by conferring resistance to certain opportunistic infections. This is Prothymosin alpha (Ptma) from Mus musculus (Mouse).